We begin with the raw amino-acid sequence, 863 residues long: DNA replication licensing factor mcm4-B (863 aa).

The segment at 1–130 (MSSPTSTPSR…ARKVKQVDLH (130 aa)) is disordered. Polar residues-rich tracts occupy residues 54-64 (SPSGDVQSPSG) and 84-99 (LDLS…SSRV). The segment at 306 to 331 (CQVCAFTTRVEIDRGRIAEPSVCKHC) adopts a C4-type zinc-finger fold. The MCM domain maps to 458-667 (IYERLAAALA…YDRRLAHHLV (210 aa)). ATP is bound by residues Tyr-471, Arg-497, Lys-516, Ser-517, Asn-618, Arg-643, Arg-732, and Glu-735. The Arginine finger signature appears at 642 to 645 (SRFD).

This sequence belongs to the MCM family. Component of the mcm2-7 complex (RLF-M). The complex forms a toroidal hexameric ring with the proposed subunit order mcm2-mcm6-mcm4-mcm7-mcm3-mcm5. The heterodimer of mmcm3/mcm5 interacts with mcm4, mmcm6, mcm7 and weakly with mcm2. Begins to associate with zmcm6 at the neurula stage. Component of the CMG helicase complex, composed of the mcm2-7 complex, the GINS complex and cdc45. In terms of processing, hyperphosphorylated during mitosis in a mechanism requiring cdc2-cyclin B and other kinases. Undergoes dephosphorylation after exiting mitosis, existing in a partially phosphorylated state in the cytosolic interphase mcm complex which associates with the pre-replication complexes (pre-Rcs). Complete dephosphorylation inactivates the mcm complex, preventing its binding to chromatin. Becomes actively phosphorylated during S phase once the mcm complex is assembled on the chromatin. This chromatin-associated phosphorylation occurs during the activation of the pre-Rcs and is independent of cdks. Phosphorylated by the cdc7-dbf4b complex.

The protein resides in the nucleus. It localises to the chromosome. It carries out the reaction ATP + H2O = ADP + phosphate + H(+). Acts as a component of the MCM2-7 complex (MCM complex) which is the replicative helicase essential for 'once per cell cycle' DNA replication initiation and elongation in eukaryotic cells. Core component of CDC45-MCM-GINS (CMG) helicase, the molecular machine that unwinds template DNA during replication, and around which the replisome is built. The active ATPase sites in the MCM2-7 ring are formed through the interaction surfaces of two neighboring subunits such that a critical structure of a conserved arginine finger motif is provided in trans relative to the ATP-binding site of the Walker A box of the adjacent subunit. The six ATPase active sites, however, are likely to contribute differentially to the complex helicase activity. The sequence is that of DNA replication licensing factor mcm4-B (mcm4-b) from Xenopus laevis (African clawed frog).